The sequence spans 183 residues: Protein Syd (183 aa).

This sequence belongs to the Syd family.

The protein resides in the cell inner membrane. Its function is as follows. Interacts with the SecY protein in vivo. May bind preferentially to an uncomplexed state of SecY, thus functioning either as a chelating agent for excess SecY in the cell or as a regulatory factor that negatively controls the translocase function. The protein is Protein Syd of Yersinia pestis bv. Antiqua (strain Antiqua).